The chain runs to 750 residues: 5-methyltetrahydropteroyltriglutamate--homocysteine methyltransferase (750 aa).

Residues 15–18 (RELK) and K114 contribute to the 5-methyltetrahydropteroyltri-L-glutamate site. L-homocysteine is bound by residues 425 to 427 (IGS) and E478. Residues 425–427 (IGS) and E478 each bind L-methionine. Residue W555 participates in 5-methyltetrahydropteroyltri-L-glutamate binding. Position 593 (D593) interacts with L-homocysteine. D593 is a binding site for L-methionine. E599 contributes to the 5-methyltetrahydropteroyltri-L-glutamate binding site. Positions 636, 638, and 660 each coordinate Zn(2+). Catalysis depends on H689, which acts as the Proton donor. Position 721 (C721) interacts with Zn(2+).

This sequence belongs to the vitamin-B12 independent methionine synthase family. Zn(2+) is required as a cofactor.

It carries out the reaction 5-methyltetrahydropteroyltri-L-glutamate + L-homocysteine = tetrahydropteroyltri-L-glutamate + L-methionine. It participates in amino-acid biosynthesis; L-methionine biosynthesis via de novo pathway; L-methionine from L-homocysteine (MetE route): step 1/1. Its function is as follows. Catalyzes the transfer of a methyl group from 5-methyltetrahydrofolate to homocysteine resulting in methionine formation. The polypeptide is 5-methyltetrahydropteroyltriglutamate--homocysteine methyltransferase (Streptococcus gordonii (strain Challis / ATCC 35105 / BCRC 15272 / CH1 / DL1 / V288)).